The following is a 132-amino-acid chain: Small ribosomal subunit protein uS8 (132 aa).

It belongs to the universal ribosomal protein uS8 family. As to quaternary structure, part of the 30S ribosomal subunit. Contacts proteins S5 and S12.

Its function is as follows. One of the primary rRNA binding proteins, it binds directly to 16S rRNA central domain where it helps coordinate assembly of the platform of the 30S subunit. This is Small ribosomal subunit protein uS8 from Rhodopseudomonas palustris (strain BisA53).